Consider the following 267-residue polypeptide: MAPSKWDDEEDSSPPPPPPVVARRKFDDEEEEDVLDSWDAAEDSEVEREKAAKAAAAAAKAEAEAAAKKKSKAQRIEERKQERKKLAEANESDEDSEEDEAARRARLRRTEKEGDLKHAQDLFEDIDLNRNRGTPKAIVISDSADPTQAVDLSAMPLFKPTTKDQFTRLTSTLIPLLTAHSKKPHYALWAQEFTKQLVKELNSGDVKKIASALTTISNEKMREERAADKGNKKTKAAKTKVSLVASRDNKIDATPYDDDGLDDDDFM.

Disordered stretches follow at residues 1–118 (MAPS…DLKH) and 221–241 (MREE…KTKV). Over residues 28-46 (DEEEEDVLDSWDAAEDSEV) the composition is skewed to acidic residues. Residues 44 to 99 (SEVEREKAAKAAAAAAKAEAEAAAKKKSKAQRIEERKQERKKLAEANESDEDSEED) adopt a coiled-coil conformation. Residues 74 to 88 (QRIEERKQERKKLAE) show a composition bias toward basic and acidic residues. The span at 90 to 100 (NESDEDSEEDE) shows a compositional bias: acidic residues. Basic and acidic residues-rich tracts occupy residues 108 to 118 (RRTEKEGDLKH) and 221 to 231 (MREERAADKGN).

This sequence belongs to the eIF-3 subunit J family. As to quaternary structure, component of the eukaryotic translation initiation factor 3 (eIF-3) complex.

It is found in the cytoplasm. Component of the eukaryotic translation initiation factor 3 (eIF-3) complex, which is involved in protein synthesis of a specialized repertoire of mRNAs and, together with other initiation factors, stimulates binding of mRNA and methionyl-tRNAi to the 40S ribosome. The eIF-3 complex specifically targets and initiates translation of a subset of mRNAs involved in cell proliferation. The protein is Eukaryotic translation initiation factor 3 subunit J (hcr1) of Aspergillus fumigatus (strain CBS 144.89 / FGSC A1163 / CEA10) (Neosartorya fumigata).